Consider the following 265-residue polypeptide: Auxin-responsive protein IAA22 (265 aa).

2 disordered regions span residues 54-88 (LSTP…ERRP) and 172-199 (DGRE…SPAM). The span at 65 to 88 (LMNKMKPCSDEGHGSRDAAQERRP) shows a compositional bias: basic and acidic residues. A PB1 domain is found at 91–194 (TMFVKVNLEG…GVDQVSERPD (104 aa)).

The protein belongs to the Aux/IAA family. As to quaternary structure, homodimers and heterodimers. Highly expressed in flowers. Expressed in roots and seedlings.

It is found in the nucleus. Functionally, aux/IAA proteins are short-lived transcriptional factors that function as repressors of early auxin response genes at low auxin concentrations. This is Auxin-responsive protein IAA22 (IAA22) from Oryza sativa subsp. japonica (Rice).